The following is a 197-amino-acid chain: Mediator of RNA polymerase II transcription subunit 10 (197 aa).

Residues 1-39 (MSSTAGTRRPRQITPTSPSPSPEPQPGATNGSSSTINVA) form a disordered region. Residues 27–37 (GATNGSSSTIN) are compositionally biased toward polar residues.

It belongs to the Mediator complex subunit 10 family. In terms of assembly, component of the Mediator complex.

The protein resides in the nucleus. Its function is as follows. Component of the Mediator complex, a coactivator involved in the regulated transcription of nearly all RNA polymerase II-dependent genes. Mediator functions as a bridge to convey information from gene-specific regulatory proteins to the basal RNA polymerase II transcription machinery. Mediator is recruited to promoters by direct interactions with regulatory proteins and serves as a scaffold for the assembly of a functional preinitiation complex with RNA polymerase II and the general transcription factors. The polypeptide is Mediator of RNA polymerase II transcription subunit 10 (NUT2) (Mycosarcoma maydis (Corn smut fungus)).